Here is a 216-residue protein sequence, read N- to C-terminus: Adenylate kinase (216 aa).

ATP is bound at residue 10-15; sequence GAGKGT. The interval 30 to 59 is NMP; it reads STGDMLREAVKADTPLGIEAKKVMDVGGLI. AMP-binding positions include Thr-31, Arg-36, 57-59, 85-88, and Gln-92; these read GLI and GFPR. The LID stretch occupies residues 122 to 159; the sequence is GRRAHLTSGRTYHIVYNPPKVEGIDDITGEELIQRTDD. ATP-binding positions include Arg-123 and 132-133; that span reads TY. 2 residues coordinate AMP: Arg-156 and Arg-167. Residue Gly-202 participates in ATP binding.

The protein belongs to the adenylate kinase family. Monomer.

Its subcellular location is the cytoplasm. The catalysed reaction is AMP + ATP = 2 ADP. It participates in purine metabolism; AMP biosynthesis via salvage pathway; AMP from ADP: step 1/1. In terms of biological role, catalyzes the reversible transfer of the terminal phosphate group between ATP and AMP. Plays an important role in cellular energy homeostasis and in adenine nucleotide metabolism. The chain is Adenylate kinase from Ruthia magnifica subsp. Calyptogena magnifica.